We begin with the raw amino-acid sequence, 473 residues long: ATP synthase subunit beta (473 aa).

158 to 165 (GGAGVGKT) is an ATP binding site.

This sequence belongs to the ATPase alpha/beta chains family. F-type ATPases have 2 components, CF(1) - the catalytic core - and CF(0) - the membrane proton channel. CF(1) has five subunits: alpha(3), beta(3), gamma(1), delta(1), epsilon(1). CF(0) has three main subunits: a(1), b(2) and c(9-12). The alpha and beta chains form an alternating ring which encloses part of the gamma chain. CF(1) is attached to CF(0) by a central stalk formed by the gamma and epsilon chains, while a peripheral stalk is formed by the delta and b chains.

It localises to the cell membrane. The enzyme catalyses ATP + H2O + 4 H(+)(in) = ADP + phosphate + 5 H(+)(out). Functionally, produces ATP from ADP in the presence of a proton gradient across the membrane. The catalytic sites are hosted primarily by the beta subunits. The protein is ATP synthase subunit beta of Bacillus velezensis (strain DSM 23117 / BGSC 10A6 / LMG 26770 / FZB42) (Bacillus amyloliquefaciens subsp. plantarum).